Consider the following 305-residue polypeptide: 4-diphosphocytidyl-2-C-methyl-D-erythritol kinase (305 aa).

Lys15 is a catalytic residue. 99-109 (PMGGGIGGGSS) serves as a coordination point for ATP. Asp141 is an active-site residue.

The protein belongs to the GHMP kinase family. IspE subfamily.

It catalyses the reaction 4-CDP-2-C-methyl-D-erythritol + ATP = 4-CDP-2-C-methyl-D-erythritol 2-phosphate + ADP + H(+). Its pathway is isoprenoid biosynthesis; isopentenyl diphosphate biosynthesis via DXP pathway; isopentenyl diphosphate from 1-deoxy-D-xylulose 5-phosphate: step 3/6. In terms of biological role, catalyzes the phosphorylation of the position 2 hydroxy group of 4-diphosphocytidyl-2C-methyl-D-erythritol. This chain is 4-diphosphocytidyl-2-C-methyl-D-erythritol kinase, found in Marinomonas sp. (strain MWYL1).